The chain runs to 222 residues: Gamma-glutamyl cyclotransferase gliK (222 aa).

The next 2 helical transmembrane spans lie at 154–174 (GWWF…AAII) and 187–207 (GHVP…MWAQ).

Belongs to the class-I pyridoxal-phosphate-dependent aminotransferase family.

It is found in the membrane. The catalysed reaction is an alpha-(gamma-L-glutamyl)-L-amino acid = 5-oxo-L-proline + an L-alpha-amino acid. It participates in secondary metabolite biosynthesis. Functionally, gamma-glutamyl cyclotransferase; part of the gene cluster that mediates the biosynthesis of an unusual class of epipolythiodioxopiperazines (ETPs) lacking the reactive thiol group important for toxicity. Firstly, L-tyrosine is prenylated by tcpD, before undergoing condensation with L-glycine in a reaction catalyzed by the NRPS tcpP leading to the diketopiperazine (DKP) backbone. Afterwards the alpha-carbon of tyrosine is oxidized by the cytochrome P450 tcpC to form a hydroxyl group. However, in contrast other ETP biosynthesis pathways studied so far, tcpC is not able to bishydroxylate the DKP at both alpha-carbon positions, but hydroxylates the alpha-carbon of the tyrosine part and the nitrogen of the glycine part. The next steps involve an alpha,beta-elimination reaction catalyzed by tcpI, a methylation by the methyltransferase tcpN the action of the four enzyme cascade tcpG/K/J/I. Due to a dysfunctional cytochrome P450 monooxygenase tcpC, the pathway leads to the biosynthesis of probable non-toxic metabolites lacking the reactive thiol group. This Claviceps purpurea (strain 20.1) (Ergot fungus) protein is Gamma-glutamyl cyclotransferase gliK.